We begin with the raw amino-acid sequence, 81 residues long: MSHAVKIYDTCIGCTQCVRACPTDVLEMVPWDGCKAGQIASAPRTEDCVGCKRCEAACPTDFLSVRVYLGSETTRSMGLAY.

4Fe-4S ferredoxin-type domains follow at residues 2–31 (SHAV…MVPW) and 39–68 (IASA…VRVY). [4Fe-4S] cluster contacts are provided by Cys11, Cys14, Cys17, Cys21, Cys48, Cys51, Cys54, and Cys58.

The eukaryotic PSI reaction center is composed of at least 11 subunits. The cofactor is [4Fe-4S] cluster.

The protein resides in the plastid. It is found in the chloroplast thylakoid membrane. It carries out the reaction reduced [plastocyanin] + hnu + oxidized [2Fe-2S]-[ferredoxin] = oxidized [plastocyanin] + reduced [2Fe-2S]-[ferredoxin]. Functionally, apoprotein for the two 4Fe-4S centers FA and FB of photosystem I (PSI); essential for photochemical activity. FB is the terminal electron acceptor of PSI, donating electrons to ferredoxin. The C-terminus interacts with PsaA/B/D and helps assemble the protein into the PSI complex. Required for binding of PsaD and PsaE to PSI. PSI is a plastocyanin/cytochrome c6-ferredoxin oxidoreductase, converting photonic excitation into a charge separation, which transfers an electron from the donor P700 chlorophyll pair to the spectroscopically characterized acceptors A0, A1, FX, FA and FB in turn. This is Photosystem I iron-sulfur center from Ostreococcus tauri.